The sequence spans 151 residues: 3-hydroxyacyl-[acyl-carrier-protein] dehydratase FabZ (151 aa).

The active site involves H54.

The protein belongs to the thioester dehydratase family. FabZ subfamily.

The protein localises to the cytoplasm. It catalyses the reaction a (3R)-hydroxyacyl-[ACP] = a (2E)-enoyl-[ACP] + H2O. Involved in unsaturated fatty acids biosynthesis. Catalyzes the dehydration of short chain beta-hydroxyacyl-ACPs and long chain saturated and unsaturated beta-hydroxyacyl-ACPs. The sequence is that of 3-hydroxyacyl-[acyl-carrier-protein] dehydratase FabZ from Buchnera aphidicola subsp. Acyrthosiphon pisum (strain 5A).